The primary structure comprises 689 residues: Solute carrier organic anion transporter family member 1B2 (689 aa).

The Cytoplasmic segment spans residues 1–26; that stretch reads MDQTQHPSKAAQPLRSEKTRHCDGFR. Residues 27-46 traverse the membrane as a helical segment; the sequence is IFLAALSFSYICKALGGVIM. The Extracellular segment spans residues 47–65; it reads KSSITQIERRFDIPSSISG. Residues 66–86 form a helical membrane-spanning segment; that stretch reads LIDGGFEIGNLLVIVFVSYFG. Residues 87–92 lie on the Cytoplasmic side of the membrane; sequence SKLHRP. A helical transmembrane segment spans residues 93-117; that stretch reads KLIGTGCFIMGIGSILTALPHFFMG. The Extracellular segment spans residues 118 to 163; it reads YYRYATENDISSLHNSTLTCLVNQTTSLTGTSPEIMEKGCEKGSNS. N-linked (GlcNAc...) asparagine glycosylation is found at Asn132 and Asn140. Residues 164 to 192 traverse the membrane as a helical segment; the sequence is YTWIYVLMGNMLRGIGETPIVPLGVSYID. Residues 193-211 are Cytoplasmic-facing; sequence DFAKEGNSSMYLGTLHTIA. The helical transmembrane segment at 212 to 232 threads the bilayer; the sequence is MIGPILGFIMSSVFAKLYVDV. At 233-250 the chain is on the extracellular side; sequence GYVDLRSVRITPQDARWV. A helical membrane pass occupies residues 251–275; the sequence is GAWWLGFIVNGLLCIICSIPFFFLP. Residues 276 to 326 are Cytoplasmic-facing; sequence KIPKRSQKERKNSASLHVLKTDEDKNPVTNPTTQEKQAPANLTGFLWSLRS. 2 positions are modified to phosphoserine: Ser288 and Ser290. A helical membrane pass occupies residues 327–348; that stretch reads ILTNEQYVIFLILTLLQISSFI. The Extracellular portion of the chain corresponds to 349 to 368; the sequence is GSFTYLFKFIEQQFGQTASQ. A helical membrane pass occupies residues 369 to 392; it reads ANFLLGVITIPTMASGMFLGGYLI. The Cytoplasmic portion of the chain corresponds to 393-396; the sequence is KRLK. Residues 397-420 form a helical membrane-spanning segment; sequence LTLLGITKFVFFTTTMAYVFYLSY. At 421 to 533 the chain is on the extracellular side; it reads FLLICENKAF…DKCKTKYYFY (113 aa). Positions 448–505 constitute a Kazal-like domain; sequence DVPLSYCNSDCICDKNQWEPVCGENGVTYISPCLAGCKSFRGDKKLMNIEFYDCSCVS. 3 disulfides stabilise this stretch: Cys454–Cys484, Cys460–Cys480, and Cys469–Cys503. N-linked (GlcNAc...) asparagine glycosylation is present at Asn513. Residues 534 to 556 form a helical membrane-spanning segment; it reads ITFQVIISFFTALGSTSLMLILI. Over 557-565 the chain is Cytoplasmic; that stretch reads RSVQPELKS. Residues 566 to 591 form a helical membrane-spanning segment; the sequence is LGMGFHSLVVRTLGGILAPVYYGALI. At 592–625 the chain is on the extracellular side; sequence DRTCMKWSVTSCGARGACRLYNSRLFGMIYVGLS. The helical transmembrane segment at 626–643 threads the bilayer; the sequence is IALKTPILLLYVALIYVM. Topologically, residues 644-689 are cytoplasmic; it reads KRKMKRNDNKILENGRKFTDEGNPEPVNNNGYSCVPSDEKNSETPL. The segment at 658–689 is disordered; that stretch reads GRKFTDEGNPEPVNNNGYSCVPSDEKNSETPL. A Phosphothreonine modification is found at Thr662. Ser680 carries the post-translational modification Phosphoserine. The span at 680-689 shows a compositional bias: basic and acidic residues; sequence SDEKNSETPL.

It belongs to the organo anion transporter (TC 2.A.60) family. In terms of tissue distribution, liver specific.

The protein resides in the cell membrane. The catalysed reaction is estrone 3-sulfate(out) = estrone 3-sulfate(in). It catalyses the reaction taurocholate(out) = taurocholate(in). The enzyme catalyses prostaglandin E2(out) = prostaglandin E2(in). It carries out the reaction L-thyroxine(out) = L-thyroxine(in). Its function is as follows. Mediates the Na(+)-independent uptake of organic anions such as taurochlate, bromosulfophthalein and steroid conjugates (estrone 3-sulfate, 17-beta-glucuronosyl estradiol, dehydroepiandrosterone sulfate). Also transports prostaglandin E2 and L-thyroxine (T4). Shows a pH-sensitive substrate specificity which may be ascribed to the protonation state of the binding site and leads to a stimulation of substrate transport in an acidic microenvironment. Hydrogencarbonate/HCO3(-) acts as the probable counteranion that exchanges for organic anions. The chain is Solute carrier organic anion transporter family member 1B2 (Slco1b2) from Mus musculus (Mouse).